We begin with the raw amino-acid sequence, 1090 residues long: Solute carrier family 38 member 10 (1090 aa).

A run of 10 helical transmembrane segments spans residues 9-31, 36-58, 84-104, 123-143, 153-173, 229-249, 272-292, 323-343, 345-365, and 378-398; these read WGLITNVVNSIVGVSVLTMPFCF, IVLGALLLVFCSWMTHQSCMFLV, LVETSMIGLMLGSCITFYVVI, TVRVFLLFAVSLFIVLPLSLQ, FSAMALLFYTVFMFVIVLSSL, IFASSLNVVTAFYVMVGFFGY, MIRVGFVMSVAVGFPMMILPC, VLTLSVVFGTMVGGVMIPNVE, ILGFTGATMGSLICFICPALI, and VVLWVGLGILVVSTLTTLSVT. Ser-441 is subject to Phosphoserine. 6 stretches are compositionally biased toward basic and acidic residues: residues 441 to 454, 493 to 508, 517 to 528, 544 to 560, 587 to 596, and 607 to 623; these read SQEKLKPAEDKEVL, EAHRHEPPIPHDKVVV, PEEKKPPPRLPD, ESEKEKQEPERGGEGKR, PRKEDSRPGN, and DSVELKALAADDGREPA. Disordered regions lie at residues 441 to 675, 729 to 831, and 857 to 1037; these read SQEK…AGSK, EIRQ…IDLR, and KAAP…ELAP. Phosphoserine occurs at positions 608 and 636. Basic and acidic residues-rich tracts occupy residues 654–665, 729–744, and 758–767; these read EAAEQREKKEAE, EIRQQRQEGEEDKPKP, and GQEEEAEHAG. Thr-769 carries the post-translational modification Phosphothreonine. Ser-887 is modified (phosphoserine). The segment covering 923–936 has biased composition (polar residues); the sequence is RQSGPTKAPVQTQA. 3 stretches are compositionally biased toward basic and acidic residues: residues 954 to 973, 1004 to 1013, and 1026 to 1037; these read PEVRSEAPRAVHIPPEEQHK, ENAKPNRDLK, and DLASHPEQELAP.

The protein belongs to the amino acid/polyamine transporter 2 family. In terms of tissue distribution, expressed in neurons, astrocytes and epithelial cells scattered throughout the central nervous system structures including striatum, ependyma, cerebral cortex, hippocampus, hypothalamus, thalamus, pons, and cerebellum (at protein level). Highly expressed in paraventricular hypothalamic nucleus, suprachiasmatic nucleus, anterior hypothalamic area central part, in lateral ventricule and in dorsal 3rd ventricule (at protein level). Expressed in choroid plexus epithelial cells (at protein level).

The protein localises to the membrane. It carries out the reaction L-glutamate(out) = L-glutamate(in). The catalysed reaction is L-glutamine(out) = L-glutamine(in). The enzyme catalyses L-alanine(in) = L-alanine(out). It catalyses the reaction L-serine(in) = L-serine(out). It carries out the reaction L-leucine(in) = L-leucine(out). Facilitates bidirectional transport of amino acids. May act as a glutamate sensor that regulates glutamate-glutamine cycle and mTOR signaling in the brain. The transport mechanism remains to be elucidated. This Mus musculus (Mouse) protein is Solute carrier family 38 member 10.